The following is a 115-amino-acid chain: NAD(P)H-quinone oxidoreductase subunit M (115 aa).

This sequence belongs to the complex I NdhM subunit family. As to quaternary structure, NDH-1 can be composed of about 15 different subunits; different subcomplexes with different compositions have been identified which probably have different functions.

It localises to the cellular thylakoid membrane. It carries out the reaction a plastoquinone + NADH + (n+1) H(+)(in) = a plastoquinol + NAD(+) + n H(+)(out). The catalysed reaction is a plastoquinone + NADPH + (n+1) H(+)(in) = a plastoquinol + NADP(+) + n H(+)(out). In terms of biological role, NDH-1 shuttles electrons from an unknown electron donor, via FMN and iron-sulfur (Fe-S) centers, to quinones in the respiratory and/or the photosynthetic chain. The immediate electron acceptor for the enzyme in this species is believed to be plastoquinone. Couples the redox reaction to proton translocation, and thus conserves the redox energy in a proton gradient. Cyanobacterial NDH-1 also plays a role in inorganic carbon-concentration. This Prochlorococcus marinus (strain MIT 9301) protein is NAD(P)H-quinone oxidoreductase subunit M.